Reading from the N-terminus, the 491-residue chain is [Pyruvate dehydrogenase (acetyl-transferring)] kinase 2, mitochondrial (491 aa).

Residues proline 153 to methionine 480 form the Histidine kinase domain. ATP is bound by residues glutamate 300–glutamate 307, aspartate 341, serine 359–lysine 360, and aspartate 383–leucine 446.

The protein belongs to the PDK/BCKDK protein kinase family. As to quaternary structure, interacts with PKP1.

The protein localises to the mitochondrion matrix. The enzyme catalyses L-seryl-[pyruvate dehydrogenase E1 alpha subunit] + ATP = O-phospho-L-seryl-[pyruvate dehydrogenase E1 alpha subunit] + ADP + H(+). Inhibits the mitochondrial pyruvate dehydrogenase complex by phosphorylation of the E1 alpha subunit (PDA1), thus contributing to the regulation of glucose metabolism. The polypeptide is [Pyruvate dehydrogenase (acetyl-transferring)] kinase 2, mitochondrial (Saccharomyces cerevisiae (strain ATCC 204508 / S288c) (Baker's yeast)).